We begin with the raw amino-acid sequence, 224 residues long: Ribonuclease HII (224 aa).

An RNase H type-2 domain is found at 1–210 (MKVAGADEAG…AKKIEEKFKR (210 aa)). A divalent metal cation contacts are provided by D7, E8, and D105.

This sequence belongs to the RNase HII family. Mn(2+) is required as a cofactor. Requires Mg(2+) as cofactor.

The protein localises to the cytoplasm. It catalyses the reaction Endonucleolytic cleavage to 5'-phosphomonoester.. Its function is as follows. Endonuclease that specifically degrades the RNA of RNA-DNA hybrids. The polypeptide is Ribonuclease HII (rnhB) (Pyrococcus abyssi (strain GE5 / Orsay)).